The primary structure comprises 964 residues: Myocardin-related transcription factor A (964 aa).

Residues 1-291 (MTLLEPEMLM…KQDKGAPAMD (291 aa)) are mediates interaction with SCAI and ACTB. One copy of the RPEL 1 repeat lies at 15-40 (SVLQLKLQQRRTREELVSQGIMPPLK). Position 41 is a phosphoserine (S41). The segment at 41–58 (SPAAFHEQRRSLERARTE) is intervening spacer sequence 1. Residues 59-84 (DYLKRKIRSRPERAELVRMHILEETS) form an RPEL 2 repeat. Positions 62 to 100 (KRKIRSRPERAELVRMHILEETSAEPSLQAKQLKLKRAR) match the Bipartite Nuclear localization signal motif. The tract at residues 85–102 (AEPSLQAKQLKLKRARLA) is intervening spacer sequence 2. The RPEL 3 repeat unit spans residues 103 to 128 (DDLNEKIAQRPGPMELVEKNILPVES). 2 disordered regions span residues 145–292 (ADSS…AMDS) and 328–371 (LPAP…RQSS). A phosphoserine mark is found at S159, S174, and S191. Polar residues predominate over residues 186–197 (SATSISPTQVLS). The segment covering 215 to 224 (PPLPPAPLLP) has biased composition (pro residues). Basic and acidic residues predominate over residues 251 to 266 (ASEKSQRSKKAKELKP). Residues 340-365 (GSSAPTPSRSLSTSSSPSSGTPGPSG) show a composition bias toward low complexity. Residues S349 and S351 each carry the phosphoserine modification. The residue at position 352 (T352) is a Phosphothreonine. Residues S355 and S358 each carry the phosphoserine modification. T360 bears the Phosphothreonine mark. S371 carries the phosphoserine modification. Residues 385–419 (LDDMKVAELKQELKLRSLPVSGTKTELIERLRAYQ) form the SAP domain. Residues S423 and S484 each carry the phosphoserine modification. Residues 484-508 (STGSTPPVSPTPSERSLLSTGDENS) are disordered. T485 carries the post-translational modification Phosphothreonine. Phosphoserine is present on S487. A Phosphothreonine modification is found at T488. The residue at position 492 (S492) is a Phosphoserine. Position 494 is a phosphothreonine (T494). Residue S496 is modified to Phosphoserine. Polar residues predominate over residues 497-508 (ERSLLSTGDENS). S520, S530, S544, and S548 each carry phosphoserine. Residues 552-600 (RAELEGLDKDQMLQEKDKQIEELTRMLQQKQQLVELLRLQLEQQKRAQQ) adopt a coiled-coil conformation. Phosphoserine occurs at positions 605, 606, 651, 687, 718, 724, and 728. Residues 638–673 (TTNHGDTQAPAPESPPVVVKQEAGPPEPDLAPSSQL) are disordered. Disordered regions lie at residues 706 to 779 (NKSA…SSSQ) and 796 to 849 (ADFK…RLED). The span at 715–727 (PAGSPQQPLSQPG) shows a compositional bias: low complexity. Polar residues predominate over residues 764 to 779 (TVTQQPKQQENGSSSQ). The span at 796–810 (ADFKEPPSLPGKEKS) shows a compositional bias: basic and acidic residues. S810 carries the phosphoserine modification. T822 carries the post-translational modification Phosphothreonine. Phosphoserine is present on residues S826 and S840. Residue T842 is modified to Phosphothreonine. The residue at position 892 (S892) is a Phosphoserine.

As to quaternary structure, interacts with SRF, forming the SRF-MRTFA nuclear complex which binds the 5'-CArG-3' consensus motif (CArG box) on DNA via SRF. Interacts (via RPEL repeats) with globular actin (G-actin), thereby regulating its subcellular location and activity of the complex formed with SRF. Either forms a trivalent (by binding three G-actin monomers) or pentavalent (by binding five G-actin monomers) complex with G-actin. Forms a nuclear ternary complex with SCAI and SRF, leading to suppress MRTFA-induced SRF transcriptional activity. Interacts with beta-actin (ACTB); interaction with ACTB prevents interaction with SCAI. Interacts with MRTFB. Post-translationally, phosphorylation at Ser-41 by Erk inhibits binding of globular actin (G-actin), unmasking the nuclear localization signal (NLS) and promoting nuclear import. In terms of tissue distribution, expressed in heart, brain, spleen, lung, liver, muscle, kidney and testis.

Its subcellular location is the cytoplasm. It is found in the nucleus. Its function is as follows. Transcription coactivator that associates with the serum response factor (SRF) transcription factor to control expression of genes regulating the cytoskeleton during development, morphogenesis and cell migration. The SRF-MRTFA complex activity responds to Rho GTPase-induced changes in cellular globular actin (G-actin) concentration, thereby coupling cytoskeletal gene expression to cytoskeletal dynamics. MRTFA binds G-actin via its RPEL repeats, regulating activity of the MRTFA-SRF complex. Activity is also regulated by filamentous actin (F-actin) in the nucleus. This chain is Myocardin-related transcription factor A (Mrtfa), found in Mus musculus (Mouse).